The following is a 587-amino-acid chain: L-ascorbate oxidase (587 aa).

The N-terminal stretch at Met1–Ala33 is a signal peptide. Plastocyanin-like domains follow at residues Ile38–Asp157 and Asp169–Pro335. Disulfide bonds link Cys54–Cys236, Cys116–Cys574, and Cys215–Cys228. The Cu cation site is built by His95, His97, His139, and His141. Residues Asn360, Asn401, and Asn475 are each glycosylated (N-linked (GlcNAc...) asparagine). The Plastocyanin-like 3 domain occupies Asn379–Glu559. Residues His480, His483, His485, His542, Cys543, His544, His548, and Met553 each contribute to the Cu cation site.

Belongs to the multicopper oxidase family. As to quaternary structure, dimer. Cu cation is required as a cofactor.

The protein localises to the secreted. The enzyme catalyses 4 L-ascorbate + O2 = 4 monodehydro-L-ascorbate radical + 2 H2O. Its function is as follows. May be involved in a redox system involving ascorbic acid. The polypeptide is L-ascorbate oxidase (Cucumis sativus (Cucumber)).